Consider the following 492-residue polypeptide: Trypanothione reductase (492 aa).

35–52 provides a ligand contact to FAD; it reads DVQTVHGPPFFAALGGTC. Cys52 and Cys57 are disulfide-bonded. The active-site Proton acceptor is His461.

It belongs to the class-I pyridine nucleotide-disulfide oxidoreductase family. In terms of assembly, homodimer. It depends on FAD as a cofactor.

It is found in the cytoplasm. It carries out the reaction trypanothione + NADP(+) = trypanothione disulfide + NADPH + H(+). Trypanothione is the parasite analog of glutathione; this enzyme is the equivalent of glutathione reductase. The polypeptide is Trypanothione reductase (TPR) (Trypanosoma congolense).